A 532-amino-acid chain; its full sequence is Metal-staphylopine-binding protein CntA (532 aa).

The N-terminal stretch at methionine 1–glycine 20 is a signal peptide. Cysteine 21 carries N-palmitoyl cysteine lipidation. Cysteine 21 carries the S-diacylglycerol cysteine lipid modification. Staphylopine is bound by residues arginine 165, arginine 418, and asparagine 448.

This sequence belongs to the bacterial solute-binding protein 5 family. In terms of assembly, the complex is composed of two ATP-binding proteins (CntD and CntF), two transmembrane proteins (CntB and CntC) and a solute-binding protein (CntA).

Its subcellular location is the cell membrane. In terms of biological role, part of the ABC transporter complex CntABCDF (Opp1) involved in the uptake of metal in complex with the metallophore staphylopine (StP). May be involved in the import of a large array of divalent metals ions such as nickel, cobalt, zinc, copper and iron. Binds the metal via the metallophore StP, and transfers the StP-metal complex to the membrane-bound permease. The chain is Metal-staphylopine-binding protein CntA from Staphylococcus aureus (strain Mu50 / ATCC 700699).